Reading from the N-terminus, the 466-residue chain is MVSQALRLLCLLLGLQGCLAAGGVAKASGGETRDMPWKPGPHRVFVTQEEAHGVLHRRRRANAFLEELRPGSLERECKEEQCSFEEAREIFKDAERTKLFWISYSDGDQCASSPCQNGGSCKDQLQSYICFCLPAFEGRNCETHKDDQLICVNENGGCEQYCSDHTGTKRSCRCHEGYSLLADGVSCTPTVEYPCGKIPILEKRNASKPQGRIVGGKVCPKGECPWQVLLLVNGAQLCGGTLINTIWVVSAAHCFDKIKNWRNLIAVLGEHDLSEHDGDEQSRRVAQVIIPSTYVPGTTNHDIALLRLHQPVVLTDHVVPLCLPERTFSERTLAFVRFSLVSGWGQLLDRGATALELMVLNVPRLMTQDCLQQSRKVGDSPNITEYMFCAGYSDGSKDSCKGDSGGPHATHYRGTWYLTGIVSWGQGCATVGHFGVYTRVSQYIEWLQKLMRSEPRPGVLLRAPFP.

An N-terminal signal peptide occupies residues 1–20 (MVSQALRLLCLLLGLQGCLA). Positions 21 to 60 (AGGVAKASGGETRDMPWKPGPHRVFVTQEEAHGVLHRRRR) are excised as a propeptide. The region spanning 61–105 (ANAFLEELRPGSLERECKEEQCSFEEAREIFKDAERTKLFWISYS) is the Gla domain. Residues glutamate 66, glutamate 67, glutamate 74, glutamate 76, glutamate 79, glutamate 80, glutamate 85, glutamate 86, glutamate 89, and glutamate 95 each carry the 4-carboxyglutamate modification. Residues cysteine 77 and cysteine 82 are joined by a disulfide bond. The region spanning 106 to 142 (DGDQCASSPCQNGGSCKDQLQSYICFCLPAFEGRNCE) is the EGF-like 1; calcium-binding domain. Cystine bridges form between cysteine 110–cysteine 121, cysteine 115–cysteine 130, cysteine 132–cysteine 141, cysteine 151–cysteine 162, cysteine 158–cysteine 172, cysteine 174–cysteine 187, cysteine 195–cysteine 322, cysteine 219–cysteine 224, cysteine 238–cysteine 254, and cysteine 370–cysteine 389. Serine 112 carries O-linked (Glc...) serine; alternate glycosylation. O-linked (Xyl...) serine; alternate glycosylation occurs at serine 112. The O-linked (Fuc) serine glycan is linked to serine 120. Position 123 is a (3R)-3-hydroxyaspartate (aspartate 123). Positions 147–188 (DQLICVNENGGCEQYCSDHTGTKRSCRCHEGYSLLADGVSCT) constitute an EGF-like 2 domain. N-linked (GlcNAc...) asparagine glycosylation is present at asparagine 205. The Peptidase S1 domain maps to 213 to 452 (IVGGKVCPKG…YIEWLQKLMR (240 aa)). Active-site charge relay system residues include histidine 253 and aspartate 302. N-linked (GlcNAc...) asparagine glycosylation occurs at asparagine 382. Aspartate 398 contacts substrate. Residues cysteine 400 and cysteine 428 are joined by a disulfide bond. The active-site Charge relay system is serine 404.

It belongs to the peptidase S1 family. Heterodimer of a light chain and a heavy chain linked by a disulfide bond. Interacts (activated) with iripin-8, a serine protease inhibitor from Ixodes ricinus saliva. The vitamin K-dependent, enzymatic carboxylation of some glutamate residues allows the modified protein to bind calcium. Post-translationally, the iron and 2-oxoglutarate dependent 3-hydroxylation of aspartate and asparagine is (R) stereospecific within EGF domains. In terms of processing, O- and N-glycosylated. N-glycosylation at Asn-205 occurs cotranslationally and is mediated by STT3A-containing complexes, while glycosylation at Asn-382 is post-translational and is mediated STT3B-containing complexes before folding. O-fucosylated by POFUT1 on a conserved serine or threonine residue found in the consensus sequence C2-X(4,5)-[S/T]-C3 of EGF domains, where C2 and C3 are the second and third conserved cysteines. Can be either O-glucosylated or O-xylosylated at Ser-112 by POGLUT1 in vitro. Plasma.

It localises to the secreted. It catalyses the reaction Selective cleavage of Arg-|-Ile bond in factor X to form factor Xa.. Functionally, initiates the extrinsic pathway of blood coagulation. Serine protease that circulates in the blood in a zymogen form. Factor VII is converted to factor VIIa by factor Xa, factor XIIa, factor IXa, or thrombin by minor proteolysis. In the presence of tissue factor and calcium ions, factor VIIa then converts factor X to factor Xa by limited proteolysis. Factor VIIa also converts factor IX to factor IXa in the presence of tissue factor and calcium. This Homo sapiens (Human) protein is Coagulation factor VII (F7).